A 291-amino-acid chain; its full sequence is Geranyl diphosphate 2-C-methyltransferase (291 aa).

This sequence belongs to the geranyl diphosphate 2-C-methyltransferase family. Mg(2+) serves as cofactor.

It catalyses the reaction (2E)-geranyl diphosphate + S-adenosyl-L-methionine = (E)-2-methylgeranyl diphosphate + S-adenosyl-L-homocysteine + H(+). Catalyzes the SAM-dependent methylation of geranyl diphosphate (GPP) to yield (E)-2-methylgeranyl diphosphate (2-MeGPP). This chain is Geranyl diphosphate 2-C-methyltransferase, found in Streptomyces ambofaciens (strain ATCC 23877 / 3486 / DSM 40053 / JCM 4204 / NBRC 12836 / NRRL B-2516).